The primary structure comprises 261 residues: ClpXP adapter protein SpxH (261 aa).

Belongs to the SpxH family. Interacts with Spx.

It localises to the cytoplasm. Functionally, adapter protein required for efficient degradation of Spx by ClpXP under non-stress conditions. Interaction with Spx stabilizes Spx and exposes the C-terminus of Spx for recognition and proteolysis by ClpXP. In Staphylococcus aureus, this protein is ClpXP adapter protein SpxH.